A 386-amino-acid polypeptide reads, in one-letter code: 23S rRNA (uracil(747)-C(5))-methyltransferase RlmC (386 aa).

Cys7, Cys15, Cys18, and Cys94 together coordinate [4Fe-4S] cluster. 4 residues coordinate S-adenosyl-L-methionine: Gln219, Phe248, Glu269, and Asn316. The active-site Nucleophile is Cys343.

Belongs to the class I-like SAM-binding methyltransferase superfamily. RNA M5U methyltransferase family. RlmC subfamily.

The enzyme catalyses uridine(747) in 23S rRNA + S-adenosyl-L-methionine = 5-methyluridine(747) in 23S rRNA + S-adenosyl-L-homocysteine + H(+). In terms of biological role, catalyzes the formation of 5-methyl-uridine at position 747 (m5U747) in 23S rRNA. The sequence is that of 23S rRNA (uracil(747)-C(5))-methyltransferase RlmC from Shewanella oneidensis (strain ATCC 700550 / JCM 31522 / CIP 106686 / LMG 19005 / NCIMB 14063 / MR-1).